Reading from the N-terminus, the 82-residue chain is MGREFGNLTRIRHVISYSLSPFEQRAFPHYFSKGIPNVLRRTRERILRVAPPFVLFYLIYTWGNQEFAQSKRKNPAKYENDK.

The Mitochondrial matrix segment spans residues 1–39; the sequence is MGREFGNLTRIRHVISYSLSPFEQRAFPHYFSKGIPNVL. A Phosphoserine modification is found at Ser16. Residue Lys33 is modified to N6-acetyllysine; alternate. Residue Lys33 is modified to N6-succinyllysine; alternate. Residues 40 to 68 form a helical membrane-spanning segment; it reads RRTRERILRVAPPFVLFYLIYTWGNQEFA. Topologically, residues 69–82 are mitochondrial intermembrane; the sequence is QSKRKNPAKYENDK.

The protein belongs to the UQCRQ/QCR8 family. Component of the ubiquinol-cytochrome c oxidoreductase (cytochrome b-c1 complex, complex III, CIII), a multisubunit enzyme composed of 11 subunits. The complex is composed of 3 respiratory subunits cytochrome b, cytochrome c1 and Rieske protein UQCRFS1, 2 core protein subunits UQCRC1/QCR1 and UQCRC2/QCR2, and 6 low-molecular weight protein subunits UQCRH/QCR6, UQCRB/QCR7, UQCRQ/QCR8, UQCR10/QCR9, UQCR11/QCR10 and subunit 9, the cleavage product of Rieske protein UQCRFS1. The complex exists as an obligatory dimer and forms supercomplexes (SCs) in the inner mitochondrial membrane with NADH-ubiquinone oxidoreductase (complex I, CI) and cytochrome c oxidase (complex IV, CIV), resulting in different assemblies (supercomplex SCI(1)III(2)IV(1) and megacomplex MCI(2)III(2)IV(2)). Interacts with UQCC6.

The protein localises to the mitochondrion inner membrane. Component of the ubiquinol-cytochrome c oxidoreductase, a multisubunit transmembrane complex that is part of the mitochondrial electron transport chain which drives oxidative phosphorylation. The respiratory chain contains 3 multisubunit complexes succinate dehydrogenase (complex II, CII), ubiquinol-cytochrome c oxidoreductase (cytochrome b-c1 complex, complex III, CIII) and cytochrome c oxidase (complex IV, CIV), that cooperate to transfer electrons derived from NADH and succinate to molecular oxygen, creating an electrochemical gradient over the inner membrane that drives transmembrane transport and the ATP synthase. The cytochrome b-c1 complex catalyzes electron transfer from ubiquinol to cytochrome c, linking this redox reaction to translocation of protons across the mitochondrial inner membrane, with protons being carried across the membrane as hydrogens on the quinol. In the process called Q cycle, 2 protons are consumed from the matrix, 4 protons are released into the intermembrane space and 2 electrons are passed to cytochrome c. The polypeptide is Cytochrome b-c1 complex subunit 8 (Uqcrq) (Rattus norvegicus (Rat)).